The sequence spans 249 residues: Probable transcriptional regulatory protein Csal_1845 (249 aa).

The protein belongs to the TACO1 family.

It localises to the cytoplasm. The protein is Probable transcriptional regulatory protein Csal_1845 of Chromohalobacter salexigens (strain ATCC BAA-138 / DSM 3043 / CIP 106854 / NCIMB 13768 / 1H11).